The primary structure comprises 249 residues: Isoprenyl transferase (249 aa).

D25 is a catalytic residue. D25 serves as a coordination point for Mg(2+). Residues 26-29, W30, R38, H42, and 70-72 contribute to the substrate site; these read GNGR and STE. Catalysis depends on N73, which acts as the Proton acceptor. Substrate is bound by residues W74, R76, R197, and 203–205; that span reads RLS. E216 contributes to the Mg(2+) binding site.

The protein belongs to the UPP synthase family. As to quaternary structure, homodimer. Mg(2+) is required as a cofactor.

Its function is as follows. Catalyzes the condensation of isopentenyl diphosphate (IPP) with allylic pyrophosphates generating different type of terpenoids. In Streptococcus pyogenes serotype M3 (strain ATCC BAA-595 / MGAS315), this protein is Isoprenyl transferase.